The sequence spans 379 residues: MHCAYFERGTCRSCGWLADPYADQLQRKMARCQSALTGLGGVWLPIVPSAETAFRNKAKMVVCGDASSPCLGILDADDDGIDLSNCPLYPTAITEAFEPLKQMIRRLGIPPYDVKKRQGELKYLLITVSEDDDSLMVRLVLRSDIWIERLRADLSTLTADLPHLAVLSVNIQPVHQAILEGEQEVILTDRETLTVHLNGLPFHLRPKSFFQTNTRVAEQLYATARSWVAEVAPVHMWDLFCGVGGFALHCADVIPGQVTGIEISAEAIASAQQSALELGLKNVSFHALGANEFIDQAVSLPQMPALVVVNPPRRGLGVGLCAFLDESVVQTVIYSSCNPESLARDLVMMPGFELVKAQVFDLFPHTAHSEVLAMLVRVR.

Positions 3, 11, 14, and 86 each coordinate [4Fe-4S] cluster. 4 residues coordinate S-adenosyl-L-methionine: Q211, F240, E262, and N310. C337 acts as the Nucleophile in catalysis.

It belongs to the class I-like SAM-binding methyltransferase superfamily. RNA M5U methyltransferase family. RlmC subfamily.

It catalyses the reaction uridine(747) in 23S rRNA + S-adenosyl-L-methionine = 5-methyluridine(747) in 23S rRNA + S-adenosyl-L-homocysteine + H(+). Functionally, catalyzes the formation of 5-methyl-uridine at position 747 (m5U747) in 23S rRNA. In Halothiobacillus neapolitanus (strain ATCC 23641 / c2) (Thiobacillus neapolitanus), this protein is 23S rRNA (uracil(747)-C(5))-methyltransferase RlmC.